The chain runs to 471 residues: Serine hydroxymethyltransferase, cytosolic (471 aa).

Lysine 249 is modified (N6-(pyridoxal phosphate)lysine).

Belongs to the SHMT family. Requires pyridoxal 5'-phosphate as cofactor.

Its subcellular location is the cytoplasm. The protein resides in the cytosol. The catalysed reaction is (6R)-5,10-methylene-5,6,7,8-tetrahydrofolate + glycine + H2O = (6S)-5,6,7,8-tetrahydrofolate + L-serine. It participates in one-carbon metabolism; tetrahydrofolate interconversion. Its function is as follows. Catalyzes the interconversion of serine and glycine. Essential for viability and required for virulence in a murine model of established pulmonary infection. This Aspergillus fumigatus (strain ATCC MYA-4609 / CBS 101355 / FGSC A1100 / Af293) (Neosartorya fumigata) protein is Serine hydroxymethyltransferase, cytosolic.